Here is a 248-residue protein sequence, read N- to C-terminus: Something about silencing protein 5 (248 aa).

Residues Met-1–Pro-139 enclose the YEATS domain. Ser-144 is modified (phosphoserine). The segment at Thr-223–Lys-248 is disordered.

Component of the SAS complex, at least composed of SAS2, SAS4 and SAS5. These three proteins constitute the core of the complex, and are sufficient to acetylate histones.

It localises to the nucleus. In terms of biological role, component of the SAS complex, a multiprotein complex that acetylates 'Lys-16' of histone H4 and 'Lys-14' of histone H3. The SAS complex is however unable to acetylate nucleosomal histones. The complex is involved in transcriptional silencing at telomeres and at HML locus. Also involved in rDNA silencing. In the complex, SAS5 is required for maximal histone acetyltransferase (HAT) activity of the complex, suggesting that it may be required to stabilize the complex or help in substrate recognition. The polypeptide is Something about silencing protein 5 (SAS5) (Saccharomyces cerevisiae (strain ATCC 204508 / S288c) (Baker's yeast)).